A 352-amino-acid chain; its full sequence is MEGISIYTSDNYTEEMGSGDYDSIKEPCFREENAHFNRIFLPTIYSIIFLTGIVGNGLVILVMGYQKKLRSMTDKYRLHLSVADLLFVITLPFWAVDAVANWYFGNFLCKAVHVIYTVNLYSSVLILAFISLDRYLAIVHATNSQKPRKLLAEKVVYVGVWIPALLLTIPDFIFASVSEADDRYICDRFYPNDLWVVVFQFQHIMVGLILPGIVILSCYCIIISKLSHSKGHQKGKALKTTVILILAFFACWLPYYIGISIDSFILLEIIKQGCEFENTVHKWISITEALAFFHCCLNPILYAFLGAKFKTSAQHALTSVSRGSSLKILSKGKRGGHSSVSTESESSSFHSS.

An important for chemokine binding and signaling region spans residues 1 to 21; that stretch reads MEGISIYTSDNYTEEMGSGDY. The Extracellular portion of the chain corresponds to 1-38; that stretch reads MEGISIYTSDNYTEEMGSGDYDSIKEPCFREENAHFNR. Residue tyrosine 7 is modified to Sulfotyrosine. Residue asparagine 11 is glycosylated (N-linked (GlcNAc...) asparagine). Position 12 is a sulfotyrosine (tyrosine 12). O-linked (Xyl...) (chondroitin sulfate) serine glycosylation is present at serine 18. Tyrosine 21 carries the sulfotyrosine modification. 2 cysteine pairs are disulfide-bonded: cysteine 28-cysteine 274 and cysteine 109-cysteine 186. The chain crosses the membrane as a helical span at residues 39-63; the sequence is IFLPTIYSIIFLTGIVGNGLVILVM. Over 64–77 the chain is Cytoplasmic; sequence GYQKKLRSMTDKYR. The helical transmembrane segment at 78–99 threads the bilayer; the sequence is LHLSVADLLFVITLPFWAVDAV. Positions 94 to 97 are chemokine binding; that stretch reads WAVD. Over 100–110 the chain is Extracellular; sequence ANWYFGNFLCK. A helical transmembrane segment spans residues 111–130; it reads AVHVIYTVNLYSSVLILAFI. Residues 113–117 are chemokine binding; sequence HVIYT. Topologically, residues 131 to 154 are cytoplasmic; it reads SLDRYLAIVHATNSQKPRKLLAEK. The short motif at 133–135 is the Important for signaling element; that stretch reads DRY. Residues 135–147 form an involved in dimerization; when bound to chemokine region; sequence YLAIVHATNSQKP. A helical transmembrane segment spans residues 155 to 174; it reads VVYVGVWIPALLLTIPDFIF. At 175 to 195 the chain is on the extracellular side; that stretch reads ASVSEADDRYICDRFYPNDLW. Residues 186–190 are chemokine binding, important for signaling; that stretch reads CDRFY. Positions 191 to 210 are involved in dimerization; the sequence is PNDLWVVVFQFQHIMVGLIL. A helical membrane pass occupies residues 196–216; it reads VVVFQFQHIMVGLILPGIVIL. Over 217–241 the chain is Cytoplasmic; that stretch reads SCYCIIISKLSHSKGHQKGKALKTT. A helical transmembrane segment spans residues 242–261; that stretch reads VILILAFFACWLPYYIGISI. The Extracellular portion of the chain corresponds to 262–282; that stretch reads DSFILLEIIKQGCEFENTVHK. An involved in dimerization region spans residues 266-268; the sequence is LLE. The chain crosses the membrane as a helical span at residues 283-302; it reads WISITEALAFFHCCLNPILY. At 303-352 the chain is on the cytoplasmic side; the sequence is AFLGAKFKTSAQHALTSVSRGSSLKILSKGKRGGHSSVSTESESSSFHSS. A phosphoserine mark is found at serine 319 and serine 321. Serine 324 and serine 325 each carry phosphoserine; by PKC and GRK6. A disordered region spans residues 329-352; it reads LSKGKRGGHSSVSTESESSSFHSS. Serine 330 carries the phosphoserine; by GRK6 modification. Lysine 331 is covalently cross-linked (Glycyl lysine isopeptide (Lys-Gly) (interchain with G-Cter in ubiquitin)). The segment covering 337–352 has biased composition (low complexity); that stretch reads HSSVSTESESSSFHSS. Serine 339 carries the phosphoserine; by GRK6 modification. Phosphoserine occurs at positions 348 and 351.

The protein belongs to the G-protein coupled receptor 1 family. Monomer. Can form homodimers. Interacts with CD164. Interacts with ARRB2; the interaction is dependent on the C-terminal phosphorylation of CXCR4 and allows activation of MAPK1 and MAPK3. Interacts with ARR3; the interaction is dependent on the C-terminal phosphorylation of CXCR4 and modulates calcium mobilization. Interacts with RNF113A; the interaction, enhanced by CXCL12, promotes CXCR4 ubiquitination and subsequent degradation. Interacts (via the cytoplasmic C-terminal) with ITCH (via the WW domains I and II); the interaction, enhanced by CXCL12, promotes CXCR4 ubiquitination and leads to its degradation. Interacts with extracellular ubiquitin. Interacts with DBN1; this interaction is enhanced by antigenic stimulation. Following LPS binding, may form a complex with GDF5, HSP90AA1 and HSPA8. In terms of processing, phosphorylated on agonist stimulation. Rapidly phosphorylated on serine and threonine residues in the C-terminal. Phosphorylation at Ser-324 and Ser-325 leads to recruitment of ITCH, ubiquitination and protein degradation. Post-translationally, ubiquitinated after ligand binding, leading to its degradation. Ubiquitinated by ITCH at the cell membrane on agonist stimulation. The ubiquitin-dependent mechanism, endosomal sorting complex required for transport (ESCRT), then targets CXCR4 for lysosomal degradation. This process is dependent also on prior Ser-/Thr-phosphorylation in the C-terminal of CXCR4. Also binding of ARRB1 to STAM negatively regulates CXCR4 sorting to lysosomes though modulating ubiquitination of SFR5S. Sulfation is required for efficient binding of CXCL12/SDF-1alpha and promotes its dimerization. In terms of processing, O- and N-glycosylated. N-glycosylation can mask coreceptor function. The O-glycosylation chondroitin sulfate attachment does not affect interaction with CXCL12/SDF-1alpha nor its coreceptor activity.

The protein resides in the cell membrane. Its subcellular location is the cell junction. It localises to the early endosome. The protein localises to the late endosome. It is found in the lysosome. Its function is as follows. Receptor for the C-X-C chemokine CXCL12/SDF-1 that transduces a signal by increasing intracellular calcium ion levels and enhancing MAPK1/MAPK3 activation. Involved in the AKT signaling cascade. Plays a role in regulation of cell migration, e.g. during wound healing. Acts as a receptor for extracellular ubiquitin; leading to enhanced intracellular calcium ions and reduced cellular cAMP levels. Binds bacterial lipopolysaccharide (LPS) et mediates LPS-induced inflammatory response, including TNF secretion by monocytes. Involved in hematopoiesis and in cardiac ventricular septum formation. Also plays an essential role in vascularization of the gastrointestinal tract, probably by regulating vascular branching and/or remodeling processes in endothelial cells. Involved in cerebellar development. In the CNS, could mediate hippocampal-neuron survival. The protein is C-X-C chemokine receptor type 4 (CXCR4) of Chlorocebus aethiops (Green monkey).